The following is a 344-amino-acid chain: Transmembrane protein 268 (344 aa).

The disordered stretch occupies residues 1–31; it reads MACEPQMDPGGAAGPLPTSSPGWSPLPGGSP. The segment covering 14–27 has biased composition (low complexity); that stretch reads GPLPTSSPGWSPLP. A run of 2 helical transmembrane segments spans residues 106–126 and 133–153; these read AFAV…SQMF and AGVL…VVIF. The disordered stretch occupies residues 244-266; that stretch reads TANEGPENLLEETPLLPDRPGST. The span at 247 to 259 shows a compositional bias: low complexity; the sequence is EGPENLLEETPLL.

As to quaternary structure, interacts with ITGAM; this interaction inhibits ITGAM degradation via the endosome-lysosome pathway. Interacts with ITGB4; this interaction prevents ITGB4 degradation.

It is found in the cell membrane. In terms of biological role, stabilizes cell surface expression of ITGAM and participates in the adhesion and migration of phagocytes during bacterial clearance. The protein is Transmembrane protein 268 (TMEM268) of Bos taurus (Bovine).